The primary structure comprises 384 residues: BTB and MATH domain-containing protein 34 (384 aa).

Positions 41 to 127 (LNGNTTLKRI…ELKFQKEQLK (87 aa)) form a coiled coil. Positions 167–277 (EFSHTFNSVA…VFNFGEYEEI (111 aa)) constitute an MATH domain. The BTB domain maps to 317–380 (SDAVMIVKDE…LYGEPALTGR (64 aa)).

This Caenorhabditis elegans protein is BTB and MATH domain-containing protein 34 (bath-34).